The following is a 196-amino-acid chain: Neurensin-1 (196 aa).

2 helical membrane-spanning segments follow: residues Leu67 to Val87 and Ala121 to Ala141.

The protein belongs to the VMP family. As to expression, expressed predominantly in brain. Also weakly expressed in lung and spleen. In brain, expressed strongly in nerve fibers of the cerebral cortex, anterior cerebral nuclei, hypothalamus, amygdaloid complex, brain stem of the metaencephalon and medulla oblongata, and moderately expressed in soma of neurons of the dentate gyrus of the hippocampus and Purkinje cells of the cerebellum.

The protein resides in the membrane. It is found in the cell projection. Its subcellular location is the neuron projection. May play an important role in neural organelle transport, and in transduction of nerve signals or in nerve growth. May play a role in neurite extension. The sequence is that of Neurensin-1 from Mus musculus (Mouse).